A 416-amino-acid polypeptide reads, in one-letter code: Glutamyl-tRNA reductase (416 aa).

Substrate contacts are provided by residues 50-53, Ser-109, 114-116, and Gln-120; these read TCNR and EPQ. The active-site Nucleophile is Cys-51. 189 to 194 serves as a coordination point for NADP(+); it reads GAGEMI.

This sequence belongs to the glutamyl-tRNA reductase family. As to quaternary structure, homodimer.

The catalysed reaction is (S)-4-amino-5-oxopentanoate + tRNA(Glu) + NADP(+) = L-glutamyl-tRNA(Glu) + NADPH + H(+). It participates in porphyrin-containing compound metabolism; protoporphyrin-IX biosynthesis; 5-aminolevulinate from L-glutamyl-tRNA(Glu): step 1/2. Its function is as follows. Catalyzes the NADPH-dependent reduction of glutamyl-tRNA(Glu) to glutamate 1-semialdehyde (GSA). The polypeptide is Glutamyl-tRNA reductase (Vesicomyosocius okutanii subsp. Calyptogena okutanii (strain HA)).